A 92-amino-acid polypeptide reads, in one-letter code: UPF0473 protein BC_4380 (92 aa).

Belongs to the UPF0473 family.

This is UPF0473 protein BC_4380 from Bacillus cereus (strain ATCC 14579 / DSM 31 / CCUG 7414 / JCM 2152 / NBRC 15305 / NCIMB 9373 / NCTC 2599 / NRRL B-3711).